A 956-amino-acid polypeptide reads, in one-letter code: Glutamyl aminopeptidase (956 aa).

The Cytoplasmic segment spans residues 1–21; it reads MILEERSSWEGSKRYCIKTKH. Residues 22 to 42 form a helical; Signal-anchor for type II membrane protein membrane-spanning segment; the sequence is VAIICAVVVAVGLIVGLSVGL. Over 43–956 the chain is Extracellular; it reads TRSCDSTEGM…IRNWFLDLNG (914 aa). Positions 48 to 87 are disordered; the sequence is STEGMTQGTTQGTTQAPSHLPPVTSPPEDQGVCPASEDES. A compositionally biased stretch (low complexity) spans 49 to 62; the sequence is TEGMTQGTTQGTTQ. N-linked (GlcNAc...) asparagine glycosylation is found at Asn-126 and Asn-199. Glu-225 provides a ligand contact to substrate. Asn-326 carries an N-linked (GlcNAc...) asparagine glycan. Substrate is bound at residue 359–363; sequence GAMEN. His-395 is a binding site for Zn(2+). Glu-396 functions as the Proton acceptor in the catalytic mechanism. His-399 and Glu-418 together coordinate Zn(2+). 10 N-linked (GlcNAc...) asparagine glycosylation sites follow: Asn-556, Asn-569, Asn-599, Asn-643, Asn-647, Asn-679, Asn-764, Asn-797, Asn-802, and Asn-829. Residue Arg-888 participates in substrate binding.

This sequence belongs to the peptidase M1 family. Homodimer; disulfide-linked. The cofactor is Zn(2+).

Its subcellular location is the cell membrane. It catalyses the reaction Release of N-terminal glutamate (and to a lesser extent aspartate) from a peptide.. Substrate specificity is modulated by calcium which enhances the enzymatic activity for cleavage of acidic residues while reducing its activity with basic residues. Inhibited by aminopeptidase inhibitors amastatin and bestatin. Functionally, regulates central hypertension through its calcium-modulated preference to cleave N-terminal acidic residues from peptides such as angiotensin II. The chain is Glutamyl aminopeptidase (ENPEP) from Bos taurus (Bovine).